Consider the following 322-residue polypeptide: Probable heme-iron transport system permease protein IsdF (322 aa).

A run of 9 helical transmembrane segments spans residues 9–29 (LLFL…FVTG), 61–81 (ILIA…LQAA), 89–109 (ANII…MLFI), 114–134 (FYLP…IILL), 143–163 (VSMI…LEIL), 179–199 (IWSD…LTLL), 233–253 (VFLA…GIIV), 267–287 (VLIP…DLLG), and 294–314 (LEIP…IYLI).

It belongs to the binding-protein-dependent transport system permease family. FecCD subfamily.

Its subcellular location is the cell membrane. Functionally, part of the binding-protein-dependent transport system for heme-iron. Responsible for the translocation of the substrate across the membrane. The chain is Probable heme-iron transport system permease protein IsdF (isdF) from Staphylococcus aureus (strain MSSA476).